Reading from the N-terminus, the 83-residue chain is uncharacterized protein (83 aa).

The tract at residues 40-65 (RMQAGASPDEDNDVNGETSFSRSFGG) is disordered. The segment covering 54–65 (NGETSFSRSFGG) has biased composition (polar residues).

This is an uncharacterized protein from Dictyostelium discoideum (Social amoeba).